A 101-amino-acid polypeptide reads, in one-letter code: Putative pterin-4-alpha-carbinolamine dehydratase (101 aa).

It belongs to the pterin-4-alpha-carbinolamine dehydratase family.

The catalysed reaction is (4aS,6R)-4a-hydroxy-L-erythro-5,6,7,8-tetrahydrobiopterin = (6R)-L-erythro-6,7-dihydrobiopterin + H2O. This chain is Putative pterin-4-alpha-carbinolamine dehydratase, found in Streptomyces coelicolor (strain ATCC BAA-471 / A3(2) / M145).